The sequence spans 172 residues: MKLGIVIFPSKMIQDKANGLRKRYDPHYALVPPHITLKTPFETQDEQLESIVNELHTIANKTNPFTLHVGKVGSFAPVNNVLYFKVEKTPELTFLNEEMHNGFFTQEREYSFVPHLTIGQDLSDAEHADVLGRLRMKDFYYEQPIDRFHLLYQLENGTWTVHETFHLGKENN.

Residue His34 is the Proton donor of the active site. 2 consecutive short sequence motifs (HXTX) follow at residues 34 to 37 (HITL) and 115 to 118 (HLTI). His115 acts as the Proton acceptor in catalysis.

Belongs to the 2H phosphoesterase superfamily. YjcG family.

This is Putative phosphoesterase BcerKBAB4_1135 from Bacillus mycoides (strain KBAB4) (Bacillus weihenstephanensis).